A 549-amino-acid chain; its full sequence is Cytoplasmic trehalase (549 aa).

Substrate-binding positions include Arg168, 175–176 (WD), Asn212, 221–223 (RSQ), 292–294 (RDE), and Gly324. Residues Asp326 and Glu509 each act as proton donor/acceptor in the active site. A substrate-binding site is contributed by Glu525.

This sequence belongs to the glycosyl hydrolase 37 family. In terms of assembly, monomer.

Its subcellular location is the cytoplasm. The enzyme catalyses alpha,alpha-trehalose + H2O = alpha-D-glucose + beta-D-glucose. Its pathway is glycan degradation; trehalose degradation; D-glucose from alpha,alpha-trehalose: step 1/1. Functionally, hydrolyzes trehalose to glucose. Could be involved, in cells returning to low osmolarity conditions, in the utilization of the accumulated cytoplasmic trehalose, which was synthesized in response to high osmolarity. This chain is Cytoplasmic trehalase, found in Shigella boydii serotype 4 (strain Sb227).